The following is a 238-amino-acid chain: Flagellar L-ring protein (238 aa).

The N-terminal stretch at 1–16 is a signal peptide; the sequence is MNKAILAVAMVLLLAG. Cys-17 is lipidated: N-palmitoyl cysteine. Cys-17 carries S-diacylglycerol cysteine lipidation.

It belongs to the FlgH family. In terms of assembly, the basal body constitutes a major portion of the flagellar organelle and consists of four rings (L,P,S, and M) mounted on a central rod.

It localises to the cell outer membrane. The protein localises to the bacterial flagellum basal body. Its function is as follows. Assembles around the rod to form the L-ring and probably protects the motor/basal body from shearing forces during rotation. The chain is Flagellar L-ring protein from Brucella melitensis biotype 2 (strain ATCC 23457).